We begin with the raw amino-acid sequence, 98 residues long: NADH-ubiquinone oxidoreductase chain 4L (98 aa).

Helical transmembrane passes span 1–21, 29–49, and 61–81; these read MSMV…GLLM, SLLC…LMIL, and IILL…LVMI.

This sequence belongs to the complex I subunit 4L family. As to quaternary structure, core subunit of respiratory chain NADH dehydrogenase (Complex I) which is composed of 45 different subunits.

The protein resides in the mitochondrion inner membrane. The enzyme catalyses a ubiquinone + NADH + 5 H(+)(in) = a ubiquinol + NAD(+) + 4 H(+)(out). Its function is as follows. Core subunit of the mitochondrial membrane respiratory chain NADH dehydrogenase (Complex I) which catalyzes electron transfer from NADH through the respiratory chain, using ubiquinone as an electron acceptor. Part of the enzyme membrane arm which is embedded in the lipid bilayer and involved in proton translocation. This is NADH-ubiquinone oxidoreductase chain 4L (MT-ND4L) from Vicugna pacos (Alpaca).